Reading from the N-terminus, the 365-residue chain is Phosphoserine aminotransferase (365 aa).

Residue R42 coordinates L-glutamate. Residues 76-77 (AR), W103, T154, D175, and Q198 each bind pyridoxal 5'-phosphate. Position 199 is an N6-(pyridoxal phosphate)lysine (K199). Residue 242–243 (NT) coordinates pyridoxal 5'-phosphate.

This sequence belongs to the class-V pyridoxal-phosphate-dependent aminotransferase family. SerC subfamily. Homodimer. Pyridoxal 5'-phosphate is required as a cofactor.

Its subcellular location is the cytoplasm. The catalysed reaction is O-phospho-L-serine + 2-oxoglutarate = 3-phosphooxypyruvate + L-glutamate. The enzyme catalyses 4-(phosphooxy)-L-threonine + 2-oxoglutarate = (R)-3-hydroxy-2-oxo-4-phosphooxybutanoate + L-glutamate. The protein operates within amino-acid biosynthesis; L-serine biosynthesis; L-serine from 3-phospho-D-glycerate: step 2/3. Its pathway is cofactor biosynthesis; pyridoxine 5'-phosphate biosynthesis; pyridoxine 5'-phosphate from D-erythrose 4-phosphate: step 3/5. Its function is as follows. Catalyzes the reversible conversion of 3-phosphohydroxypyruvate to phosphoserine and of 3-hydroxy-2-oxo-4-phosphonooxybutanoate to phosphohydroxythreonine. In Blochmanniella floridana, this protein is Phosphoserine aminotransferase.